The following is a 444-amino-acid chain: NAD(P)-specific glutamate dehydrogenase (444 aa).

Positions 88, 109, and 112 each coordinate substrate. The active-site Proton donor is lysine 124. Glycine 163 is a binding site for substrate. NADP(+) is bound by residues threonine 207 and asparagine 238. Residue serine 376 participates in substrate binding.

The protein belongs to the Glu/Leu/Phe/Val dehydrogenases family. As to quaternary structure, homohexamer.

The catalysed reaction is L-glutamate + NAD(+) + H2O = 2-oxoglutarate + NH4(+) + NADH + H(+). The enzyme catalyses L-glutamate + NADP(+) + H2O = 2-oxoglutarate + NH4(+) + NADPH + H(+). Its function is as follows. Catalyzes the reversible oxidative deamination of glutamate to alpha-ketoglutarate and ammonia. P.ruminicola possess both NADP(H)- and NAD(H)-dependent activities on the same enzyme, suggesting that both anabolic and catabolic forms of the enzyme might occur. The chain is NAD(P)-specific glutamate dehydrogenase (gdhA) from Xylanibacter ruminicola (Prevotella ruminicola).